A 429-amino-acid chain; its full sequence is Enolase (429 aa).

(2R)-2-phosphoglycerate is bound at residue Gln163. The Proton donor role is filled by Glu205. Asp242, Glu286, and Asp313 together coordinate Mg(2+). 4 residues coordinate (2R)-2-phosphoglycerate: Lys338, Arg367, Ser368, and Lys389. Lys338 serves as the catalytic Proton acceptor.

The protein belongs to the enolase family. It depends on Mg(2+) as a cofactor.

It is found in the cytoplasm. Its subcellular location is the secreted. It localises to the cell surface. It catalyses the reaction (2R)-2-phosphoglycerate = phosphoenolpyruvate + H2O. The protein operates within carbohydrate degradation; glycolysis; pyruvate from D-glyceraldehyde 3-phosphate: step 4/5. Its function is as follows. Catalyzes the reversible conversion of 2-phosphoglycerate (2-PG) into phosphoenolpyruvate (PEP). It is essential for the degradation of carbohydrates via glycolysis. The polypeptide is Enolase (Thermoanaerobacter sp. (strain X514)).